The primary structure comprises 239 residues: Putative GEM-like protein 3 (239 aa).

Residues 29-68 form a disordered region; it reads HWNPELVSESPAPDEKALSSSSAARSNPYVARAPTETSDA. A GRAM domain is found at 128-191; it reads KIFRQTFETV…HQLKSVNPSI (64 aa).

The protein belongs to the GEM family.

The polypeptide is Putative GEM-like protein 3 (Arabidopsis thaliana (Mouse-ear cress)).